A 239-amino-acid chain; its full sequence is Ribosomal RNA small subunit methyltransferase G (239 aa).

Residues G95, L100, 118–120, 146–147, and R164 each bind S-adenosyl-L-methionine; these read EAT and AE.

Belongs to the methyltransferase superfamily. RNA methyltransferase RsmG family.

The protein resides in the cytoplasm. It carries out the reaction guanosine(527) in 16S rRNA + S-adenosyl-L-methionine = N(7)-methylguanosine(527) in 16S rRNA + S-adenosyl-L-homocysteine. In terms of biological role, specifically methylates the N7 position of guanine in position 527 of 16S rRNA. In Sorangium cellulosum (strain So ce56) (Polyangium cellulosum (strain So ce56)), this protein is Ribosomal RNA small subunit methyltransferase G.